The primary structure comprises 115 residues: Migration and invasion enhancer 1 (115 aa).

S2 is subject to N-acetylserine. Residues C30 and C33 are joined by a disulfide bond. C112 carries the S-geranylgeranyl cysteine lipid modification. A propeptide spans 113–115 (VIL) (removed in mature form).

The protein belongs to the SelWTH family. As to quaternary structure, interacts with GPX1. Post-translationally, isoprenylation facilitates association with the plasma membrane and enhances the migratory phenotype of cells by inducing increased filopodia formation. Widely expressed with highest levels in kidney followed by brain and testis.

It is found in the cytoplasm. Its subcellular location is the cytosol. The protein localises to the cell membrane. Functionally, increases cell migration by inducing filopodia formation at the leading edge of migrating cells. Plays a role in regulation of apoptosis, possibly through control of CASP3. May be involved in a redox-related process. The chain is Migration and invasion enhancer 1 (Mien1) from Mus musculus (Mouse).